The chain runs to 368 residues: Putative zinc metalloprotease Cj1068 (368 aa).

H36 provides a ligand contact to Zn(2+). E37 is an active-site residue. H40 contacts Zn(2+). A run of 3 helical transmembrane segments spans residues 112–134, 291–313, and 338–360; these read IYILFAGPFFNLILAFFLYIIIG, FTLLLFITALISINLGILNLLPI, and TFEYLSYTGMAILLSLMLFATYN. The 72-residue stretch at 126–197 folds into the PDZ domain; sequence AFFLYIIIGN…LKILINREGK (72 aa).

Belongs to the peptidase M50B family. Zn(2+) is required as a cofactor.

It is found in the cell inner membrane. The chain is Putative zinc metalloprotease Cj1068 from Campylobacter jejuni subsp. jejuni serotype O:2 (strain ATCC 700819 / NCTC 11168).